The following is a 365-amino-acid chain: MRGQFWLVMSCYIITIICKLAFCIKLIENEKSIFGFKSKKKDMKKLSNIKVRNWKQKKIQQFFIINKVKNKKYNNLKKSLNMEYSNTDDQRLSLLKNLENKSKIITQSPAWNEKIPLLEINDLHAIEVEGGKEILKGINLTIYLGEKHSIMGRNGSGKSTLAKVIAGHPYFKVTKGSMKFKGLNLTDLTVNHRSLCGIFLAFQYPIELPMVKNNEFLRTALNCHRRQNNEPELSPSEFDLLMINEIKKVGLSPEFLDRPVNYGFSGGEKKRNEILQMLILKPSFCILDETDSGLDVDSFKLTSDIIQKFSNINNSFLIVTHYKKLLELLKPNYIHIMHKGKIIKTGNYSLVDKIESDGYAQFVEE.

An ABC transporter domain is found at 118-364 (LEINDLHAIE…ESDGYAQFVE (247 aa)). Residue 152-159 (GRNGSGKS) participates in ATP binding.

It belongs to the ABC transporter superfamily. Ycf16 family. In terms of assembly, component of a complex composed of SufB, SufC and SufD in a stoichiometric ratio of 1:2:1. Interacts with SufB. Interacts with SufD; the interaction enhances the ATPase activity of SufC.

It is found in the plastid. Its subcellular location is the apicoplast. The catalysed reaction is ATP + H2O = ADP + phosphate + H(+). It functions in the pathway cofactor biosynthesis; iron-sulfur cluster biosynthesis. In terms of biological role, participates in the sulfur mobilization (SUF) pathway for iron-sulfur (Fe-S) cluster biogenesis. As part of a complex consisting of SufB-SufC(2)-SufD, involved in assembly of [4Fe-4S] clusters. Exhibits ATPase activity. The protein is Iron-sulfur cluster assembly protein SufC of Plasmodium berghei (strain Anka).